The following is a 386-amino-acid chain: MTVLKMTDLDLKGKRVLIREDLNVPVKDGVVKSDARILASLPTIKLALEKGAAVMVCSHLGRPTEGEYSEENSLKPVADYLSGALGREVPLLGEYLDGVKVEPGQVVLFENVRFNKGEKKNADELAQRYAALCDVFVMDAFGTAHRAEGSTHGVARFAKVACAGPLLAAELEALGKALDNPQRPMAAIVAGSKVSTKLDVLNSLSQVCDQLIVGGGIANTFLAAAGYKVGKSLYEADLVDTAKAIAAKVSVPLPVDVVVAKAFAESAEATVKAIDEVADDDMILDIGPQTAAQFAELLKSSRTILWNGPVGVFEFDQFGNGTKVLAEAIAASPAFSIAGGGDTLAAIDKYGVGEKISYISTGGGAFLEFVEGKVLPAVAVLEERAR.

Substrate contacts are provided by residues 21–23 (DLN), arginine 36, 59–62 (HLGR), arginine 113, and arginine 146. ATP is bound by residues lysine 197, glutamate 314, and 340-343 (GGDT).

It belongs to the phosphoglycerate kinase family. As to quaternary structure, monomer.

It localises to the cytoplasm. It carries out the reaction (2R)-3-phosphoglycerate + ATP = (2R)-3-phospho-glyceroyl phosphate + ADP. It functions in the pathway carbohydrate degradation; glycolysis; pyruvate from D-glyceraldehyde 3-phosphate: step 2/5. The protein is Phosphoglycerate kinase of Azotobacter vinelandii (strain DJ / ATCC BAA-1303).